Consider the following 160-residue polypeptide: MTIAVYPGSFDPVTNGHLDIAARASRIFDTVIMAVFDRPNKQLLFSTDERVALLRESTRHLPRVKVDTYSTLTVDYVRSVGASVIVRGMRAVGDFEAEFQLAQINQTLAPDIDIVLFMASHRYTFFSSSTVREIASLGGDVSWLVPGPVVDALKRVYGRR.

S9 serves as a coordination point for substrate. ATP-binding positions include S9–F10 and H17. Positions 41, 73, and 87 each coordinate substrate. Residues G88–R90, E98, and Y123–S129 each bind ATP.

It belongs to the bacterial CoaD family. In terms of assembly, homohexamer. The cofactor is Mg(2+).

It is found in the cytoplasm. The enzyme catalyses (R)-4'-phosphopantetheine + ATP + H(+) = 3'-dephospho-CoA + diphosphate. It participates in cofactor biosynthesis; coenzyme A biosynthesis; CoA from (R)-pantothenate: step 4/5. Reversibly transfers an adenylyl group from ATP to 4'-phosphopantetheine, yielding dephospho-CoA (dPCoA) and pyrophosphate. The sequence is that of Phosphopantetheine adenylyltransferase from Roseiflexus castenholzii (strain DSM 13941 / HLO8).